Here is a 490-residue protein sequence, read N- to C-terminus: Cytochrome P450 monooxygenase aclL (490 aa).

The chain crosses the membrane as a helical span at residues 1–21; that stretch reads MLFSLGPLTIVYGLVIFVVAK. N-linked (GlcNAc...) asparagine glycosylation is present at Asn-176. Heme is bound at residue Cys-434.

It belongs to the cytochrome P450 family. It depends on heme as a cofactor.

Its subcellular location is the membrane. Its pathway is mycotoxin biosynthesis. Cytochrome P450 monooxygenase; part of the gene cluster that mediates the biosynthesis of aspirochlorine (or antibiotic A30641), an unusual halogenated spiro compound with distinctive antifungal properties due to selective inhibition of protein biosynthesis, and which is also active against bacteria, viruses, and murine tumor cells. The non-ribosomal peptide synthetase (NRPS) aclP is responsible the formation of the diketopiperazine (DKP) core from the condensation of 2 phenylalanine residues. One Phe residue is tailored into chlorotyrosine by hydroxylation and chlorination, whereas the second Phe undergoes an unprecedented C-C bond cleavage to be converted into glycine. After formation of the DKP, sulfur is incorporated into the DKP by conjugation with glutathione by aclG, followed by its stepwise degradation to the thiol by aclI, aclJ and aclK, and the dithiol oxidation by aclT. In addition, oxygenases (aclB, aclC, aclL and aclO) and O-methyltransferases (aclM and aclU) act as tailoring enzymes to produce the intermediate dechloroaspirochlorine. Ultimately, chlorination of dechloroaspirochlorine by the halogenase aclH is the last step in the aspirochlorine pathway. The protein is Cytochrome P450 monooxygenase aclL of Aspergillus oryzae (strain ATCC 42149 / RIB 40) (Yellow koji mold).